The sequence spans 182 residues: Glycerol-3-phosphate acyltransferase 1 (182 aa).

Transmembrane regions (helical) follow at residues 5-25 (MQFLYLVASYLFGNILTAYIV), 54-74 (GYFVATFLGDAIKGAIVVSIA), 81-101 (STFLMLTLLAVIMGHIYPILF), 117-137 (IAFDYLIALTLVTVFIIFYLI), and 157-177 (ILYSYSIVTTILSVLIIVLIL).

This sequence belongs to the PlsY family. Probably interacts with PlsX.

It is found in the cell membrane. It catalyses the reaction an acyl phosphate + sn-glycerol 3-phosphate = a 1-acyl-sn-glycero-3-phosphate + phosphate. The protein operates within lipid metabolism; phospholipid metabolism. In terms of biological role, catalyzes the transfer of an acyl group from acyl-phosphate (acyl-PO(4)) to glycerol-3-phosphate (G3P) to form lysophosphatidic acid (LPA). This enzyme utilizes acyl-phosphate as fatty acyl donor, but not acyl-CoA or acyl-ACP. The sequence is that of Glycerol-3-phosphate acyltransferase 1 from Bacillus thuringiensis subsp. konkukian (strain 97-27).